We begin with the raw amino-acid sequence, 362 residues long: Chorismate synthase (362 aa).

Position 47 (R47) interacts with NADP(+). FMN-binding positions include 124–126, G286, 301–305, and R327; these read RAS and KPTAT.

It belongs to the chorismate synthase family. Homotetramer. FMNH2 serves as cofactor.

It carries out the reaction 5-O-(1-carboxyvinyl)-3-phosphoshikimate = chorismate + phosphate. Its pathway is metabolic intermediate biosynthesis; chorismate biosynthesis; chorismate from D-erythrose 4-phosphate and phosphoenolpyruvate: step 7/7. Catalyzes the anti-1,4-elimination of the C-3 phosphate and the C-6 proR hydrogen from 5-enolpyruvylshikimate-3-phosphate (EPSP) to yield chorismate, which is the branch point compound that serves as the starting substrate for the three terminal pathways of aromatic amino acid biosynthesis. This reaction introduces a second double bond into the aromatic ring system. This is Chorismate synthase from Prochlorococcus marinus (strain SARG / CCMP1375 / SS120).